A 396-amino-acid polypeptide reads, in one-letter code: Probable sugar efflux transporter (396 aa).

The next 12 helical transmembrane spans lie at 15–35 (VVTL…PVGL), 50–70 (VGIM…PFML), 81–101 (LICL…SWSF), 103–123 (VLVI…SITA), 136–156 (AQAL…GLPL), 170–190 (FFAI…LLPL), 209–229 (PALM…YTAY), 246–266 (FATA…VIFG), 275–295 (ALVS…LPAA), 299–319 (IHLG…GLGM), 333–353 (VAMA…ALVG), and 364–384 (MIGY…IIIF).

This sequence belongs to the major facilitator superfamily. SotB (TC 2.A.1.2) family.

It localises to the cell inner membrane. Its function is as follows. Involved in the efflux of sugars. The physiological role may be the reduction of the intracellular concentration of toxic sugars or sugar metabolites. The polypeptide is Probable sugar efflux transporter (Escherichia coli O139:H28 (strain E24377A / ETEC)).